Reading from the N-terminus, the 231-residue chain is Octanoyltransferase (231 aa).

The region spanning 49–224 is the BPL/LPL catalytic domain; it reads ADTPDEIWLL…ALQRLLPPVY (176 aa). Substrate-binding positions include 88-95, 155-157, and 168-170; these read RGGQITYH, ALG, and GLA. Cys-186 acts as the Acyl-thioester intermediate in catalysis.

It belongs to the LipB family.

It is found in the cytoplasm. The enzyme catalyses octanoyl-[ACP] + L-lysyl-[protein] = N(6)-octanoyl-L-lysyl-[protein] + holo-[ACP] + H(+). The protein operates within protein modification; protein lipoylation via endogenous pathway; protein N(6)-(lipoyl)lysine from octanoyl-[acyl-carrier-protein]: step 1/2. In terms of biological role, catalyzes the transfer of endogenously produced octanoic acid from octanoyl-acyl-carrier-protein onto the lipoyl domains of lipoate-dependent enzymes. Lipoyl-ACP can also act as a substrate although octanoyl-ACP is likely to be the physiological substrate. This is Octanoyltransferase from Aromatoleum aromaticum (strain DSM 19018 / LMG 30748 / EbN1) (Azoarcus sp. (strain EbN1)).